The chain runs to 301 residues: N-acetylmuramic acid 6-phosphate etherase (301 aa).

Positions 57 to 220 constitute an SIS domain; it reads IAEAFRQGGR…TTGAMIRTGK (164 aa). The active-site Proton donor is the Glu-85. Residue Glu-116 is part of the active site.

It belongs to the GCKR-like family. MurNAc-6-P etherase subfamily. In terms of assembly, homodimer.

The catalysed reaction is N-acetyl-D-muramate 6-phosphate + H2O = N-acetyl-D-glucosamine 6-phosphate + (R)-lactate. Its pathway is amino-sugar metabolism; 1,6-anhydro-N-acetylmuramate degradation. It functions in the pathway amino-sugar metabolism; N-acetylmuramate degradation. The protein operates within cell wall biogenesis; peptidoglycan recycling. In terms of biological role, specifically catalyzes the cleavage of the D-lactyl ether substituent of MurNAc 6-phosphate, producing GlcNAc 6-phosphate and D-lactate. Together with AnmK, is also required for the utilization of anhydro-N-acetylmuramic acid (anhMurNAc) either imported from the medium or derived from its own cell wall murein, and thus plays a role in cell wall recycling. The protein is N-acetylmuramic acid 6-phosphate etherase of Photorhabdus laumondii subsp. laumondii (strain DSM 15139 / CIP 105565 / TT01) (Photorhabdus luminescens subsp. laumondii).